Here is a 356-residue protein sequence, read N- to C-terminus: Nicotinate-nucleotide--dimethylbenzimidazole phosphoribosyltransferase (356 aa).

Glu317 acts as the Proton acceptor in catalysis.

Belongs to the CobT family. In terms of assembly, homodimer.

It catalyses the reaction 5,6-dimethylbenzimidazole + nicotinate beta-D-ribonucleotide = alpha-ribazole 5'-phosphate + nicotinate + H(+). It functions in the pathway nucleoside biosynthesis; alpha-ribazole biosynthesis; alpha-ribazole from 5,6-dimethylbenzimidazole: step 1/2. Functionally, catalyzes the synthesis of alpha-ribazole-5'-phosphate from nicotinate mononucleotide (NAMN) and 5,6-dimethylbenzimidazole (DMB). The protein is Nicotinate-nucleotide--dimethylbenzimidazole phosphoribosyltransferase of Salmonella paratyphi A (strain ATCC 9150 / SARB42).